Here is a 301-residue protein sequence, read N- to C-terminus: RNA polymerase II holoenzyme cyclin-like subunit (301 aa).

The Cyclin N-terminal domain maps to 53-142 (QQLIKLGKRT…LGECEFALIS (90 aa)).

Belongs to the cyclin family. Cyclin C subfamily. As to quaternary structure, component of the srb8-11 complex, a regulatory module of the Mediator complex.

The protein resides in the nucleus. In terms of biological role, component of the srb8-11 complex. The srb8-11 complex is a regulatory module of the Mediator complex which is itself involved in regulation of basal and activated RNA polymerase II-dependent transcription. The srb8-11 complex may be involved in the transcriptional repression of a subset of genes regulated by Mediator. It may inhibit the association of the Mediator complex with RNA polymerase II to form the holoenzyme complex. The srb8-11 complex phosphorylates the C-terminal domain (CTD) of the largest subunit of RNA polymerase II. The protein is RNA polymerase II holoenzyme cyclin-like subunit (ssn8) of Aspergillus terreus (strain NIH 2624 / FGSC A1156).